The following is a 214-amino-acid chain: Ribonuclease HII (214 aa).

One can recognise an RNase H type-2 domain in the interval 18 to 208 (SRVVGVDEVG…SLLPSEAHLC (191 aa)). A divalent metal cation is bound by residues Asp-24, Glu-25, and Asp-116.

The protein belongs to the RNase HII family. It depends on Mn(2+) as a cofactor. Requires Mg(2+) as cofactor.

It localises to the cytoplasm. It catalyses the reaction Endonucleolytic cleavage to 5'-phosphomonoester.. Its function is as follows. Endonuclease that specifically degrades the RNA of RNA-DNA hybrids. This chain is Ribonuclease HII, found in Thermosynechococcus vestitus (strain NIES-2133 / IAM M-273 / BP-1).